We begin with the raw amino-acid sequence, 260 residues long: Carbonic anhydrase 3 (260 aa).

At alanine 2 the chain carries N-acetylalanine. The 257-residue stretch at 3–259 folds into the Alpha-carbonic anhydrase domain; the sequence is KEWGYASHNG…IKGRVVRASF (257 aa). Phosphoserine is present on residues serine 29, serine 43, serine 48, serine 50, and serine 55. Residues 64–67 are involved in proton transfer; sequence KTCR. Threonine 73 carries the phosphothreonine modification. The Zn(2+) site is built by histidine 94, histidine 96, and histidine 119. Residue tyrosine 127 is modified to Phosphotyrosine. Threonine 129 bears the Phosphothreonine mark. Cysteine 182 and cysteine 187 each carry S-glutathionyl cysteine. 198–199 contributes to the substrate binding site; that stretch reads TT. Residue threonine 216 is modified to Phosphothreonine. Phosphoserine is present on serine 219.

Belongs to the alpha-carbonic anhydrase family. The cofactor is Zn(2+). Post-translationally, S-thiolated both by thiol-disulfide exchange with glutathione disulfide and by oxyradical-initiated S-thiolation with reduced glutathione. S-glutathionylated in hepatocytes under oxidative stress. As to expression, expressed in liver and muscle.

It localises to the cytoplasm. It catalyses the reaction hydrogencarbonate + H(+) = CO2 + H2O. Its activity is regulated as follows. Inhibited by acetazolamide. Functionally, reversible hydration of carbon dioxide. This chain is Carbonic anhydrase 3 (Ca3), found in Rattus norvegicus (Rat).